A 341-amino-acid chain; its full sequence is Phosphoribosylformylglycinamidine cyclo-ligase (341 aa).

This sequence belongs to the AIR synthase family.

It localises to the cytoplasm. It catalyses the reaction 2-formamido-N(1)-(5-O-phospho-beta-D-ribosyl)acetamidine + ATP = 5-amino-1-(5-phospho-beta-D-ribosyl)imidazole + ADP + phosphate + H(+). The protein operates within purine metabolism; IMP biosynthesis via de novo pathway; 5-amino-1-(5-phospho-D-ribosyl)imidazole from N(2)-formyl-N(1)-(5-phospho-D-ribosyl)glycinamide: step 2/2. This is Phosphoribosylformylglycinamidine cyclo-ligase from Lachnoclostridium phytofermentans (strain ATCC 700394 / DSM 18823 / ISDg) (Clostridium phytofermentans).